A 729-amino-acid polypeptide reads, in one-letter code: Methionine--tRNA ligase (729 aa).

The 'HIGH' region signature appears at 12–22 (PYVNNIPHLGN). Zn(2+)-binding residues include Cys-143, Cys-146, Cys-155, and Cys-158. The short motif at 330-334 (KFSKS) is the 'KMSKS' region element. Residue Lys-333 participates in ATP binding. Residues 565 to 670 (FSEQVCLKVV…DNPIPGERII (106 aa)) enclose the tRNA-binding domain.

It belongs to the class-I aminoacyl-tRNA synthetase family. MetG type 1 subfamily. As to quaternary structure, homodimer. Zn(2+) is required as a cofactor.

Its subcellular location is the cytoplasm. The enzyme catalyses tRNA(Met) + L-methionine + ATP = L-methionyl-tRNA(Met) + AMP + diphosphate. Functionally, is required not only for elongation of protein synthesis but also for the initiation of all mRNA translation through initiator tRNA(fMet) aminoacylation. The sequence is that of Methionine--tRNA ligase from Borrelia hermsii (strain HS1 / DAH).